A 767-amino-acid polypeptide reads, in one-letter code: RNA cytosine C(5)-methyltransferase NSUN2 (767 aa).

The disordered stretch occupies residues Met-1–Gly-36. Lys-46 participates in a covalent cross-link: Glycyl lysine isopeptide (Lys-Gly) (interchain with G-Cter in SUMO2). Ser-139 is modified (phosphoserine; by AURKB). S-adenosyl-L-methionine-binding positions include Cys-184–Lys-190, Asp-215, Asp-242, and Asp-268. Cys-321 (nucleophile) is an active-site residue. The disordered stretch occupies residues Asn-436–Asp-481. Ser-456 carries the phosphoserine modification. The span at Thr-461–Lys-470 shows a compositional bias: basic and acidic residues. Residues Lys-464 and Lys-470 each participate in a glycyl lysine isopeptide (Lys-Gly) (interchain with G-Cter in SUMO2) cross-link. A Phosphoserine modification is found at Ser-473. Residues Lys-511 and Lys-516 each participate in a glycyl lysine isopeptide (Lys-Gly) (interchain with G-Cter in SUMO2) cross-link. Residue Lys-586 is modified to N6-acetyllysine; alternate. N6-malonyllysine; alternate is present on Lys-586. Residue Lys-586 forms a Glycyl lysine isopeptide (Lys-Gly) (interchain with G-Cter in SUMO2); alternate linkage. Ser-593 carries the phosphoserine modification. Glycyl lysine isopeptide (Lys-Gly) (interchain with G-Cter in SUMO2) cross-links involve residues Lys-640, Lys-654, and Lys-660. Thr-718 bears the Phosphothreonine mark. A compositionally biased stretch (polar residues) spans Asn-719–Asn-730. The segment at Asn-719–Arg-767 is disordered. Phosphoserine occurs at positions 724, 743, and 751.

The protein belongs to the class I-like SAM-binding methyltransferase superfamily. RsmB/NOP family. TRM4 subfamily. Interacts with NPM1 and NCL during interphase; interaction is disrupted following phosphorylation at Ser-139. In terms of processing, phosphorylated at Ser-139 by AURKB during mitosis, leading to abolish methyltransferase activity and the interaction with NPM1. In terms of tissue distribution, expressed in adult and fetal brain and in lymphoblastoid cells.

Its subcellular location is the nucleus. The protein resides in the nucleolus. It is found in the cytoplasm. The protein localises to the mitochondrion. It localises to the cytoskeleton. Its subcellular location is the spindle. The protein resides in the secreted. It is found in the extracellular exosome. It catalyses the reaction cytidine(48) in tRNA + S-adenosyl-L-methionine = 5-methylcytidine(48) in tRNA + S-adenosyl-L-homocysteine + H(+). The enzyme catalyses cytidine(49) in tRNA + S-adenosyl-L-methionine = 5-methylcytidine(49) in tRNA + S-adenosyl-L-homocysteine + H(+). The catalysed reaction is cytidine(50) in tRNA + S-adenosyl-L-methionine = 5-methylcytidine(50) in tRNA + S-adenosyl-L-homocysteine + H(+). It carries out the reaction cytidine(34) in tRNA precursor + S-adenosyl-L-methionine = 5-methylcytidine(34) in tRNA precursor + S-adenosyl-L-homocysteine + H(+). It catalyses the reaction a cytidine in mRNA + S-adenosyl-L-methionine = a 5-methylcytidine in mRNA + S-adenosyl-L-homocysteine + H(+). Its activity is regulated as follows. Inhibited by magnesium ions. Functionally, RNA cytosine C(5)-methyltransferase that methylates cytosine to 5-methylcytosine (m5C) in various RNAs, such as tRNAs, mRNAs and some long non-coding RNAs (lncRNAs). Involved in various processes, such as epidermal stem cell differentiation, testis differentiation and maternal to zygotic transition during early development: acts by increasing protein synthesis; cytosine C(5)-methylation promoting tRNA stability and preventing mRNA decay. Methylates cytosine to 5-methylcytosine (m5C) at positions 34 and 48 of intron-containing tRNA(Leu)(CAA) precursors, and at positions 48, 49 and 50 of tRNA(Gly)(GCC) precursors. tRNA methylation is required generation of RNA fragments derived from tRNAs (tRFs). Also mediates C(5)-methylation of mitochondrial tRNAs. Catalyzes cytosine C(5)-methylation of mRNAs, leading to stabilize them and prevent mRNA decay: mRNA stabilization involves YBX1 that specifically recognizes and binds m5C-modified transcripts. Cytosine C(5)-methylation of mRNAs also regulates mRNA export: methylated transcripts are specifically recognized by THOC4/ALYREF, which mediates mRNA nucleo-cytoplasmic shuttling. Also mediates cytosine C(5)-methylation of non-coding RNAs, such as vault RNAs (vtRNAs), promoting their processing into regulatory small RNAs. Cytosine C(5)-methylation of vtRNA VTRNA1.1 promotes its processing into small-vault RNA4 (svRNA4) and regulates epidermal differentiation. May act downstream of Myc to regulate epidermal cell growth and proliferation. Required for proper spindle assembly and chromosome segregation, independently of its methyltransferase activity. The polypeptide is RNA cytosine C(5)-methyltransferase NSUN2 (Homo sapiens (Human)).